We begin with the raw amino-acid sequence, 518 residues long: Type II methyltransferase M.HindII (518 aa).

Belongs to the N(4)/N(6)-methyltransferase family.

The catalysed reaction is a 2'-deoxyadenosine in DNA + S-adenosyl-L-methionine = an N(6)-methyl-2'-deoxyadenosine in DNA + S-adenosyl-L-homocysteine + H(+). Functionally, a gamma subtype methylase, recognizes the double-stranded sequence 5'-GTYRAC-3', methylates A-5 on both strands, and protects the DNA from cleavage by the HindII endonuclease. The chain is Type II methyltransferase M.HindII (hindIIM) from Haemophilus influenzae (strain ATCC 51907 / DSM 11121 / KW20 / Rd).